Consider the following 485-residue polypeptide: Cys-Gly metallodipeptidase DUG1 (485 aa).

Zn(2+) is bound at residue histidine 109. The active site involves aspartate 111. Residue aspartate 144 coordinates Zn(2+). Glutamate 178 acts as the Proton acceptor in catalysis. Zn(2+)-binding residues include glutamate 179, aspartate 207, and histidine 457.

This sequence belongs to the peptidase M20A family. Homodimer. Component of the GSH degradosomal complex. Zn(2+) serves as cofactor. Requires Mn(2+) as cofactor.

It localises to the cytoplasm. In terms of biological role, catalytic component of the GSH degradosomal complex involved in the degradation of glutathione (GSH) and other peptides containing a gamma-glu-X bond. Also functions as a dipeptidase with high specificity for Cys-Gly and no activity toward tri- or tetrapeptides. This Candida albicans (strain SC5314 / ATCC MYA-2876) (Yeast) protein is Cys-Gly metallodipeptidase DUG1 (DUG1).